The sequence spans 118 residues: Large ribosomal subunit protein uL24 (118 aa).

Belongs to the universal ribosomal protein uL24 family. As to quaternary structure, part of the 50S ribosomal subunit.

One of two assembly initiator proteins, it binds directly to the 5'-end of the 23S rRNA, where it nucleates assembly of the 50S subunit. Its function is as follows. One of the proteins that surrounds the polypeptide exit tunnel on the outside of the subunit. This chain is Large ribosomal subunit protein uL24, found in Prochlorococcus marinus (strain SARG / CCMP1375 / SS120).